The primary structure comprises 218 residues: CTD kinase subunit gamma (218 aa).

The CID domain occupies 2-138 (DPFEGRMTFL…DAMATVEAHE (137 aa)). The interval 137–157 (HEQASKSGDTSTSGAISKNDI) is disordered. Residues 141–152 (SKSGDTSTSGAI) show a composition bias toward polar residues.

This sequence belongs to the CTK3 family. As to quaternary structure, CTDK-I consists of three subunits, ctk1/lsk1, ctk2/lsc1 and ctk3 (also called alpha, beta and gamma).

It is found in the cytoplasm. Its subcellular location is the nucleus. Subunit of the CTDK-I complex, which hyperphosphorylates the C-terminal heptapeptide repeat domain (CTD) of the largest RNA polymerase II subunit. As part of the CTDK-I complex, involved in RNA polymerase II transcriptional elongation and pre-mRNA 3'-end processing. Together with ctk2, required for ctk1/lsk1 CTD kinase activation. The polypeptide is CTD kinase subunit gamma (Schizosaccharomyces pombe (strain 972 / ATCC 24843) (Fission yeast)).